A 64-amino-acid polypeptide reads, in one-letter code: Large ribosomal subunit protein bL32 (64 aa).

Positions 1–23 (MAVQKSRVTPSRRGQRRSHDALA) are disordered.

The protein belongs to the bacterial ribosomal protein bL32 family.

The chain is Large ribosomal subunit protein bL32 from Xylella fastidiosa (strain M23).